A 449-amino-acid chain; its full sequence is Histidinol dehydrogenase (449 aa).

The NAD(+) site is built by Tyr-135, Gln-199, and Asn-229. Thr-252, Gln-274, and His-277 together coordinate substrate. The Zn(2+) site is built by Gln-274 and His-277. Active-site proton acceptor residues include Glu-343 and His-344. 4 residues coordinate substrate: His-344, Asp-377, Glu-431, and His-436. A Zn(2+)-binding site is contributed by Asp-377. His-436 lines the Zn(2+) pocket.

Belongs to the histidinol dehydrogenase family. It depends on Zn(2+) as a cofactor.

It catalyses the reaction L-histidinol + 2 NAD(+) + H2O = L-histidine + 2 NADH + 3 H(+). The protein operates within amino-acid biosynthesis; L-histidine biosynthesis; L-histidine from 5-phospho-alpha-D-ribose 1-diphosphate: step 9/9. In terms of biological role, catalyzes the sequential NAD-dependent oxidations of L-histidinol to L-histidinaldehyde and then to L-histidine. The polypeptide is Histidinol dehydrogenase (Corynebacterium diphtheriae (strain ATCC 700971 / NCTC 13129 / Biotype gravis)).